Consider the following 778-residue polypeptide: DISP complex protein LRCH3 (778 aa).

LRR repeat units lie at residues 56–79, 81–104, 105–127, 128–150, 152–172, 173–195, 197–218, 220–239, 240–264, and 266–290; these read AAVT…AANH, LTDT…ACHF, VSLE…VLNL, QALT…LCNL, LKVL…IGHL, RHLT…IGNL, ALRD…LAEV, LIRL…CYRN, LRHL…CIKG, and IHIF…ERRP. Residues 56-290 are mediates interaction with DOCK7; it reads AAVTGVLSLS…PDLPDYERRP (235 aa). Ser-324, Ser-415, and Ser-419 each carry phosphoserine. The tract at residues 382–642 is mediates direct interaction with MYO6; it reads TTEEEENDVK…PATDPTDAIT (261 aa). The disordered stretch occupies residues 511 to 536; sequence QKASHNPQRQQPPGNGECSFPSRRSQ. The segment covering 514-523 has biased composition (polar residues); sequence SHNPQRQQPP. A phosphoserine mark is found at Ser-608 and Ser-625. The region spanning 645-758 is the Calponin-homology (CH) domain; that stretch reads REEELKLIDQ…VTVQALLELA (114 aa). Positions 758 to 778 are disordered; that stretch reads APPKQPPPQQPQQQQPQLSAV. Residues 768 to 778 are compositionally biased toward low complexity; sequence PQQQQPQLSAV.

As to quaternary structure, component of the DOCK7-induced septin displacement/DISP complex, at least composed of DOCK7, LRCH3 and MYO6.

It is found in the cytoplasm. Functionally, as part of the DISP complex, may regulate the association of septins with actin and thereby regulate the actin cytoskeleton. The sequence is that of DISP complex protein LRCH3 from Mus musculus (Mouse).